A 185-amino-acid chain; its full sequence is Transcription termination/antitermination protein NusG (185 aa).

The region spanning 134–163 is the KOW domain; that stretch reads VGQQVRIVEGPFATFSGEVEEVMSERNKVR.

The protein belongs to the NusG family.

Participates in transcription elongation, termination and antitermination. This Treponema pallidum (strain Nichols) protein is Transcription termination/antitermination protein NusG.